Consider the following 95-residue polypeptide: uncharacterized protein (95 aa).

2 stretches are compositionally biased toward basic and acidic residues: residues 1-28 (MRRA…KERC) and 41-53 (DERV…KGRP). The segment at 1-73 (MRRAEVKRSA…RTSRAGSSWQ (73 aa)) is disordered.

This is an uncharacterized protein from Homo sapiens (Human).